We begin with the raw amino-acid sequence, 74 residues long: Small ribosomal subunit protein uS8c (74 aa).

It belongs to the universal ribosomal protein uS8 family. As to quaternary structure, part of the 30S ribosomal subunit.

It localises to the plastid. The protein resides in the chloroplast. One of the primary rRNA binding proteins, it binds directly to 16S rRNA central domain where it helps coordinate assembly of the platform of the 30S subunit. This chain is Small ribosomal subunit protein uS8c (rps8), found in Oenothera ammophila (Evening primerose).